Consider the following 113-residue polypeptide: MSQEIYDYANQLERAVRALPEYQKVLEVKEAIQADASASELFDEFVAMQEKIQGMMQSGQMPTAEEQTSIQELSQKIEANDQLKAYFEAQQALSVYMSDIERIVFAPLKDLVK.

The protein belongs to the UPF0342 family.

In Streptococcus pyogenes serotype M12 (strain MGAS2096), this protein is UPF0342 protein MGAS2096_Spy0691.